The sequence spans 263 residues: 3-methyl-2-oxobutanoate hydroxymethyltransferase (263 aa).

Mg(2+)-binding residues include aspartate 45 and aspartate 84. 3-methyl-2-oxobutanoate-binding positions include 45-46 (DS), aspartate 84, and lysine 112. Mg(2+) is bound at residue glutamate 114. Glutamate 180 serves as the catalytic Proton acceptor.

This sequence belongs to the PanB family. Homodecamer; pentamer of dimers. Mg(2+) is required as a cofactor.

The protein resides in the cytoplasm. The enzyme catalyses 3-methyl-2-oxobutanoate + (6R)-5,10-methylene-5,6,7,8-tetrahydrofolate + H2O = 2-dehydropantoate + (6S)-5,6,7,8-tetrahydrofolate. The protein operates within cofactor biosynthesis; (R)-pantothenate biosynthesis; (R)-pantoate from 3-methyl-2-oxobutanoate: step 1/2. Functionally, catalyzes the reversible reaction in which hydroxymethyl group from 5,10-methylenetetrahydrofolate is transferred onto alpha-ketoisovalerate to form ketopantoate. The chain is 3-methyl-2-oxobutanoate hydroxymethyltransferase from Salmonella arizonae (strain ATCC BAA-731 / CDC346-86 / RSK2980).